Consider the following 227-residue polypeptide: Small ribosomal subunit protein uS3 (227 aa).

The region spanning 39 to 107 (VREFLDKRLV…PVHINIEEVR (69 aa)) is the KH type-2 domain.

This sequence belongs to the universal ribosomal protein uS3 family. Part of the 30S ribosomal subunit. Forms a tight complex with proteins S10 and S14.

Its function is as follows. Binds the lower part of the 30S subunit head. Binds mRNA in the 70S ribosome, positioning it for translation. This Marinobacter nauticus (strain ATCC 700491 / DSM 11845 / VT8) (Marinobacter aquaeolei) protein is Small ribosomal subunit protein uS3.